The sequence spans 763 residues: Endothelin-converting enzyme 2 (763 aa).

At 1 to 60 (MNVALHELGGGGSMVEYKRAKLRDEESPEITVEGRATRDSLEVGFQKRTRQLFGSHTQLE) the chain is on the cytoplasmic side. Position 27 is a phosphoserine (S27). A helical; Signal-anchor for type II membrane protein membrane pass occupies residues 61–81 (LVLAGLILVLAALLLGCLVAL). Over 82–763 (WVHRDPAHST…MNPGQLCEVW (682 aa)) the chain is Lumenal. One can recognise a Peptidase M13 domain in the interval 91–763 (TCVTEACIRV…MNPGQLCEVW (673 aa)). 5 disulfide bridges follow: C92–C97, C115–C748, C123–C708, C179–C428, and C637–C760. Residues N159, N163, N204, N264, N309, N376, and N532 are each glycosylated (N-linked (GlcNAc...) asparagine). H600 provides a ligand contact to Zn(2+). E601 is an active-site residue. H604 is a Zn(2+) binding site. N-linked (GlcNAc...) asparagine glycosylation is found at N625 and N633. E660 serves as a coordination point for Zn(2+). Catalysis depends on D664, which acts as the Proton donor.

This sequence belongs to the peptidase M13 family. Requires Zn(2+) as cofactor.

The protein localises to the golgi apparatus membrane. The protein resides in the cytoplasmic vesicle. Its subcellular location is the secretory vesicle membrane. The catalysed reaction is Hydrolysis of the 21-Trp-|-Val-22 bond in big endothelin to form endothelin 1.. Converts big endothelin-1 to endothelin-1. Also involved in the processing of various neuroendocrine peptides, including neurotensin, angiotensin I, substance P, proenkephalin-derived peptides, and prodynorphin-derived peptides. May play a role in amyloid-beta processing. In Mus musculus (Mouse), this protein is Endothelin-converting enzyme 2.